The primary structure comprises 108 residues: MTLIMIGVDLVKIERLENKSDHFVRKILSLDEYELYQKTKAKAIFLATRWAIKEALFKADNQHFCFKKINITKKDNVYKFDGFAISVSSEKEYVIAFVQKIGVACHRD.

The Mg(2+) site is built by aspartate 9 and glutamate 54.

Belongs to the P-Pant transferase superfamily. AcpS family. It depends on Mg(2+) as a cofactor.

Its subcellular location is the cytoplasm. The catalysed reaction is apo-[ACP] + CoA = holo-[ACP] + adenosine 3',5'-bisphosphate + H(+). Its function is as follows. Transfers the 4'-phosphopantetheine moiety from coenzyme A to a Ser of acyl-carrier-protein. This chain is Holo-[acyl-carrier-protein] synthase, found in Mycoplasmopsis pulmonis (strain UAB CTIP) (Mycoplasma pulmonis).